The primary structure comprises 752 residues: Iron-sulfur clusters transporter ABCB7, mitochondrial (752 aa).

The transit peptide at 1–22 directs the protein to the mitochondrion; that stretch reads MALLAMHSWRWAAAAAAFEKRR. Over 23–140 the chain is Mitochondrial matrix; it reads HSAILIRPLV…KDRPDLRARV (118 aa). In terms of domain architecture, ABC transmembrane type-1 spans 140–436; that stretch reads VAISLGFLGG…LGTVYRETRQ (297 aa). Residues 141-161 form a helical membrane-spanning segment; the sequence is AISLGFLGGAKAMNIVVPFMF. The Mitochondrial intermembrane segment spans residues 162–185; sequence KYAVDSLNQMSGNMLNLSDAPNTV. A helical membrane pass occupies residues 186-206; it reads ATMATAVLIGYGVSRAGAAFF. The Mitochondrial matrix portion of the chain corresponds to 207 to 259; it reads NEVRNAVFGKVAQNSIRRIAKNVFLHLHNLDLGFHLSRQTGALSKAIDRGTRG. Residues lysine 216 and lysine 251 each carry the N6-acetyllysine modification. A helical transmembrane segment spans residues 260–280; sequence ISFVLSALVFNLLPIMFEVML. At 281-290 the chain is on the mitochondrial intermembrane side; that stretch reads VSGVLYYKCG. The chain crosses the membrane as a helical span at residues 291–311; it reads AQFALVTLGTLGTYTAFTVAV. The Mitochondrial matrix segment spans residues 312-382; it reads TRWRTRFRIE…TLAMLNFGQS (71 aa). Glutathione is bound at residue 315 to 319; sequence RTRFR. At serine 336 the chain carries Phosphoserine. Position 340 is a phosphotyrosine (tyrosine 340). At threonine 342 the chain carries Phosphothreonine. Glutathione is bound at residue 378 to 381; the sequence is NFGQ. Residues 383-403 form a helical membrane-spanning segment; it reads AIFSVGLTAIMVLASQGIVAG. Residues 404-409 are Mitochondrial intermembrane-facing; the sequence is TLTVGD. Residues 410–430 traverse the membrane as a helical segment; that stretch reads LVMVNGLLFQLSLPLNFLGTV. Glycine 428 is a glutathione binding site. Residues 431 to 752 lie on the Mitochondrial matrix side of the membrane; sequence YRETRQALID…SVKGCGNCSC (322 aa). Residues 472-706 form the ABC transporter domain; sequence VAFDNVHFEY…PHSIYSEMWH (235 aa). Residues tyrosine 481 and 505–516 contribute to the ATP site; that span reads GGSGSGKSTIVR.

It belongs to the ABC transporter superfamily. ABCB family. Heavy Metal importer (TC 3.A.1.210) subfamily. In terms of assembly, homodimer or heterodimer. Interacts with C10orf88/PAAT. Forms a complex with ABCB10 and FECH, where a dimeric FECH bridges ABCB7 and ABCB10 homodimers; this complex may be required for cellular iron homeostasis, mitochondrial function and heme biosynthesis. Interacts with FECH. Interacts with ATP5F1A. Interacts with COX4I1; this interaction allows the regulation of cellular iron homeostasis and cellular reactive oxygen species (ROS) levels in cardiomyocytes.

The protein localises to the mitochondrion inner membrane. It catalyses the reaction (glutathione)4[2Fe(III)-2S] cluster(in) + ATP + H2O = (glutathione)4[2Fe(III)-2S] cluster(out) + ADP + phosphate + H(+). With respect to regulation, ATPase activity is stimulated by glutathione. Functionally, exports glutathione-coordinated iron-sulfur clusters such as [2Fe-2S]-(GS)4 cluster from the mitochondria to the cytosol in an ATP-dependent manner allowing the assembly of the cytosolic iron-sulfur (Fe/S) cluster-containing proteins and participates in iron homeostasis. Moreover, through a functional complex formed of ABCB7, FECH and ABCB10, also plays a role in the cellular iron homeostasis, mitochondrial function and heme biosynthesis. In cardiomyocytes, regulates cellular iron homeostasis and cellular reactive oxygen species (ROS) levels through its interaction with COX4I1. May also play a role in hematopoiesis. The polypeptide is Iron-sulfur clusters transporter ABCB7, mitochondrial (Homo sapiens (Human)).